The following is a 240-amino-acid chain: Pyridoxine 5'-phosphate synthase (240 aa).

3-amino-2-oxopropyl phosphate is bound at residue Asn7. Residue Asp9–His10 participates in 1-deoxy-D-xylulose 5-phosphate binding. Arg18 contacts 3-amino-2-oxopropyl phosphate. The active-site Proton acceptor is the His43. 1-deoxy-D-xylulose 5-phosphate is bound by residues Arg45 and His50. The active-site Proton acceptor is the Glu70. Residue Thr100 participates in 1-deoxy-D-xylulose 5-phosphate binding. The Proton donor role is filled by His191. 3-amino-2-oxopropyl phosphate contacts are provided by residues Gly192 and Gly213–His214.

Belongs to the PNP synthase family. As to quaternary structure, homooctamer; tetramer of dimers.

It localises to the cytoplasm. The catalysed reaction is 3-amino-2-oxopropyl phosphate + 1-deoxy-D-xylulose 5-phosphate = pyridoxine 5'-phosphate + phosphate + 2 H2O + H(+). It functions in the pathway cofactor biosynthesis; pyridoxine 5'-phosphate biosynthesis; pyridoxine 5'-phosphate from D-erythrose 4-phosphate: step 5/5. Functionally, catalyzes the complicated ring closure reaction between the two acyclic compounds 1-deoxy-D-xylulose-5-phosphate (DXP) and 3-amino-2-oxopropyl phosphate (1-amino-acetone-3-phosphate or AAP) to form pyridoxine 5'-phosphate (PNP) and inorganic phosphate. The sequence is that of Pyridoxine 5'-phosphate synthase from Gloeothece citriformis (strain PCC 7424) (Cyanothece sp. (strain PCC 7424)).